We begin with the raw amino-acid sequence, 169 residues long: Small ribosomal subunit protein uS13c (169 aa).

Residues 1–47 (MAQMVAMPVAHSLSLICNWAKSNPLSRNTLALPASNTPNKQSLSIRC) constitute a chloroplast transit peptide.

This sequence belongs to the universal ribosomal protein uS13 family. As to quaternary structure, part of the 30S ribosomal subunit.

It is found in the plastid. The protein resides in the chloroplast. Functionally, located at the top of the head of the 30S subunit, it contacts several helices of the 16S rRNA. This Arabidopsis thaliana (Mouse-ear cress) protein is Small ribosomal subunit protein uS13c (RPS13).